A 277-amino-acid polypeptide reads, in one-letter code: Collectin-10 (277 aa).

Positions 1–27 (MNGFRVLLRSNLSMLLLLALLHFQSLG) are cleaved as a signal peptide. Asn-11 carries N-linked (GlcNAc...) asparagine glycosylation. Residues 41-103 (THTISPGPKG…IGKKGDKGEK (63 aa)) form a disordered region. Residues 45–103 (SPGPKGDDGERGDTGEEGKDGKVGRQGPKGVKGELGDMGAQGNIGKSGPIGKKGDKGEK) enclose the Collagen-like domain. Residues 49–67 (KGDDGERGDTGEEGKDGKV) are compositionally biased toward basic and acidic residues. One can recognise a C-type lectin domain in the interval 155–271 (TEEKFYYIVQ…CHLTMYFVCE (117 aa)). Cystine bridges form between Cys-176–Cys-270 and Cys-248–Cys-262. Asn-258 carries N-linked (GlcNAc...) asparagine glycosylation.

Belongs to the COLEC10/COLEC11 family. Expressed mainly in the liver and stomach, but also in muscles, testes, and intestines.

It localises to the secreted. Its subcellular location is the golgi apparatus. It is found in the cytoplasm. Its function is as follows. Lectin that binds to various sugars: galactose &gt; mannose = fucose &gt; N-acetylglucosamine &gt; N-acetylgalactosamine. Acts as a chemoattractant, probably involved in the regulation of cell migration. The chain is Collectin-10 (Colec10) from Mus musculus (Mouse).